Consider the following 205-residue polypeptide: Large ribosomal subunit protein bL25 (205 aa).

The tract at residues His180 to Glu205 is disordered. Positions Val183–Glu205 are enriched in acidic residues.

It belongs to the bacterial ribosomal protein bL25 family. CTC subfamily. In terms of assembly, part of the 50S ribosomal subunit; part of the 5S rRNA/L5/L18/L25 subcomplex. Contacts the 5S rRNA. Binds to the 5S rRNA independently of L5 and L18.

Its function is as follows. This is one of the proteins that binds to the 5S RNA in the ribosome where it forms part of the central protuberance. In Corynebacterium diphtheriae (strain ATCC 700971 / NCTC 13129 / Biotype gravis), this protein is Large ribosomal subunit protein bL25.